A 416-amino-acid chain; its full sequence is Glutamyl-tRNA reductase (416 aa).

Substrate-binding positions include 49–52 (TCNR), serine 105, 110–112 (EPQ), and glutamine 116. Cysteine 50 serves as the catalytic Nucleophile. 185-190 (GAGETI) is a binding site for NADP(+).

It belongs to the glutamyl-tRNA reductase family. In terms of assembly, homodimer.

It catalyses the reaction (S)-4-amino-5-oxopentanoate + tRNA(Glu) + NADP(+) = L-glutamyl-tRNA(Glu) + NADPH + H(+). It functions in the pathway porphyrin-containing compound metabolism; protoporphyrin-IX biosynthesis; 5-aminolevulinate from L-glutamyl-tRNA(Glu): step 1/2. In terms of biological role, catalyzes the NADPH-dependent reduction of glutamyl-tRNA(Glu) to glutamate 1-semialdehyde (GSA). This Shewanella frigidimarina (strain NCIMB 400) protein is Glutamyl-tRNA reductase.